Consider the following 198-residue polypeptide: Recombination protein RecR (198 aa).

Residues C57–C72 form a C4-type zinc finger. Residues S80 to P175 enclose the Toprim domain.

It belongs to the RecR family.

May play a role in DNA repair. It seems to be involved in an RecBC-independent recombinational process of DNA repair. It may act with RecF and RecO. This Listeria monocytogenes serotype 4b (strain CLIP80459) protein is Recombination protein RecR.